Consider the following 515-residue polypeptide: Maturase K (515 aa).

Belongs to the intron maturase 2 family. MatK subfamily.

The protein localises to the plastid. The protein resides in the chloroplast. In terms of biological role, usually encoded in the trnK tRNA gene intron. Probably assists in splicing its own and other chloroplast group II introns. The protein is Maturase K of Pinus luchuensis (Ryukyu island pine).